Consider the following 205-residue polypeptide: tRNA (pseudouridine(54)-N(1))-methyltransferase (205 aa).

Residues leucine 136, glycine 156, 179–184 (LSPLEL), and cysteine 189 contribute to the S-adenosyl-L-methionine site.

Belongs to the methyltransferase superfamily. TrmY family. Homodimer.

The protein localises to the cytoplasm. It carries out the reaction pseudouridine(54) in tRNA + S-adenosyl-L-methionine = N(1)-methylpseudouridine(54) in tRNA + S-adenosyl-L-homocysteine + H(+). Specifically catalyzes the N1-methylation of pseudouridine at position 54 (Psi54) in tRNAs. The protein is tRNA (pseudouridine(54)-N(1))-methyltransferase of Methanocaldococcus jannaschii (strain ATCC 43067 / DSM 2661 / JAL-1 / JCM 10045 / NBRC 100440) (Methanococcus jannaschii).